Reading from the N-terminus, the 159-residue chain is Small ribosomal subunit protein uS17 (159 aa).

This sequence belongs to the universal ribosomal protein uS17 family.

It is found in the cytoplasm. This is Small ribosomal subunit protein uS17 (RPS11) from Zea mays (Maize).